Consider the following 538-residue polypeptide: Zinc finger protein with KRAB and SCAN domains 3 (538 aa).

S42 bears the Phosphoserine mark. The SCAN box domain occupies 46-128 (RERFRGFRYP…VLLEYLERQL (83 aa)). K171 is covalently cross-linked (Glycyl lysine isopeptide (Lys-Gly) (interchain with G-Cter in SUMO2)). Residue T207 is modified to Phosphothreonine. Residues 214–274 (LKVEDVALTL…PAEELPEKEH (61 aa)) enclose the KRAB domain. The span at 226–236 (EWTQQDSSQGN) shows a compositional bias: polar residues. Positions 226 to 274 (EWTQQDSSQGNLCRDEKQENHGSLVSLGDEKQTKSRDLPPAEELPEKEH) are disordered. Over residues 253 to 274 (GDEKQTKSRDLPPAEELPEKEH) the composition is skewed to basic and acidic residues. C2H2-type zinc fingers lie at residues 314–336 (HICH…RRIH), 342–364 (YECE…QRVH), 370–392 (YECE…QRTH), 398–420 (YECD…HRIH), and 426–448 (YQCS…QRIH). T449 is subject to Phosphothreonine. C2H2-type zinc fingers lie at residues 480-502 (YKCN…QKIH) and 508-530 (YQCN…QRSH).

This sequence belongs to the krueppel C2H2-type zinc-finger protein family.

The protein resides in the nucleus. Its subcellular location is the cytoplasm. In terms of biological role, transcriptional factor that binds to the consensus sequence 5'-[GT][AG][AGT]GGGG-3' and acts as a repressor of autophagy. Specifically represses expression of genes involved in autophagy and lysosome biogenesis/function such as MAP1LC3B, ULK1 or WIPI2. Associates with chromatin at the ITGB4 and VEGF promoters. Also acts as a transcription activator and promotes cancer cell progression and/or migration in various tumors and myelomas. In Homo sapiens (Human), this protein is Zinc finger protein with KRAB and SCAN domains 3 (ZKSCAN3).